Here is a 4467-residue protein sequence, read N- to C-terminus: MRGINAIVGFLLCFCLLHRINTAVQFKQEILEEGKSAGYVVLSLPLPPSNEIYTFFQAQDSGSRDALLLFQISESGVIKTTKPITYEIGQKNYYDLVAIRRQRGEKVGGIPTSIRIVIKDTNNFSPTFPQHLYYGRVKERSPDNTVVMGLENCFAEDRDTGGIQSYSISSGNDKGYFKTSMTTVNDRKFLVLKTTNVPILIDTTPEINLTVRAYDGANSATTGITVKIIDENDNSPVFEKKSYATTVNEDTPLLTSVLRVRATDKDLGTNGGVYYYLNGAQYFSVDAITGVIKVVRQLPDQPRIVLDVKATDRGTPSKTASVQVTIDINGIPDYPPPDSSNPGVNTVPVFQEESYTASVREDFPINAALLVIHAIDRDPPGRNRQIRYSLSSSGTFEIDQFSGVVKLVGRLNYDSKKQYNLFVRATDQALTPLVASASLKVTVQEVDKNRNTPVFSPANPQQRMVSIKENMPASTQVGSLITATDADGNQGPDGQIAYSIFSGSGLPYFQINKDTGRLETVIRLDRERQSQYDLIVEARDKALYPLFSHVYLMINIDPEEDNNPDFSKVVYTANVPEKAPRDTFVTVIHATDRDGASVSYSIQNAGSAFAIRAETGVIVTARVLDASIGDTDFTLFVTASAGTKKSESQINVTIVSKQDSPPTFKNAPYSVTVPENLGKIDNLLCIAAYGVRGTAVSYSIASAAVGKFAVDIDSGRFSATSSFDYEQVLGGEYPVQVQASTSPQQVATAGITVRVTDDKDPPTFSRSSYTFDIDENTPGGTTILPKNADGSSGGLLISDEDTAITQFDCTIENVPGNVFDHFRVVNPDNSVRECKLVTVRGFNFVENPSFQFEVRATDRNYRNMFASAQVKVVIKDTNNHSPEFSQTSYWASVGRDYPTGNSILKVTATDQDSGSFGEITYELLNTQDRSRFSLDSNTGVLSFPNSLPARRYQLRVQASDRAQKSNEIRRTEVDVFVTVYLPGTGIIVFDPPLFPKAIREDITINTQVKLVSTRGASNIKYSIVGGNTNNAFRIGSNNGQILVQKALDRETQSKYTLVIRAEESTSNVATEANFIISVTDVNDNPPRITFMEAQPKNIAIEDFSPPGSPVIRVIATDPDTGAAAAIKYSITIGTPFSINEDNGLITAAREIRKTERSTWDLTVTARDSGTPSRNSAPYRLRIHVTDGLQAPQLQPRFSVNVNENEQVGNVVKDISPVQKNPNFKYSILSGNRDDAFCINHAGMISVAKPLDREKVNSYILRVSASVGNKISNSTVSVTIADQNDDAPQFSRTVYTFEVREDLPQGREVGRVFAIDRDDGTNGQVSYSLLYTVDVNSKFTVDGATGAVVTGSVLDFEEIRQHILYVKAEDKGRPLRTSIAKVIVNVKDVNDRSPKFSADSYVTKVSLDEVIGTQVLLVSATDLDSGDNSVVVYNITAGNEEGAFEIDPDTGAIKVKKSLTTVSASKFSLRVEAKDKGNPPRMTPTTVQLNIFLPDGPPKFVVKPVVEERFEGIAANGRVMVVKAATSEALTYEIISGNEDGLFRIEPTTGEIKVTRVLDYEEASEHRLVVRVMDTRDRSDRVTVILKVKNINDNEPQFPGESNGFVERKVEDDFQIGDAAARLSAYDKDAGDSISYQLSANALPLFSIDNEGFLIAKKPRSEIQSPVKFELVAKDNGVPQRQTTVQVRLVFVSYRGDQQPVRVYVREDKEVGSVIARVPRFFPGGTLSIIFPQKANFTVDNSGRIRMTTAFDFEQSQFYRLTVREQEPAPGRRTNDIDVEINVVDVNDNKPKFTMIDFFGRVNTNSRPGTSAYQLKAEDKDGGLSGTVGYQMLSRDVPFGINPISGVVETDATLQDRGGYNITVFPFDFGVPREFGAAVSLDIKTVNFKPQFSESAYRFQVFENAPPGVIVGEVNATSLSGARLGFSVPLGDPSKKFEVHNSGEIRLNSRLDHEKQSIYNLKVRATELIPGGYSNEVEVQVTVTNANEYYPKFEPNLYFKVVNENVAAGQSVLRVTAIDKDCGTTSKCEAGLLKFSVEGTSLFKIDPRTGDVSVGSTPLDYEKQREHVFTVVVEDFGEKIYKSRGFVTIDVRNTDDEKPQFLESDYTISIAEDAETGRPLAAILARDADGDPVKYSITSGDSGGIFQINPTTGVLSLKSSIKGNPRTQYTLQVKASNSAQDSRFDEVRVVVNIEDSNDNRPVFTDCPPEVPVEENKPRGHRVYQVVAQDTKDRGRNKEIEYFLVTGGERLFEIDNTTGVIKTLTSLDRETKDQHTLIIMAEDGGHGRNSAERLLSYCILDVKVVDQNDNFPFFLTRTYYASVWQGAPVNTEVLTVRAADMDTRVNANIDNSEVQYQLVNADDKFQVELATGVIKTKATLVSFVGKVQLQIRAINKQPMAISEERPRTSTTTVEINVEKDKPPAFAPSAVYKSAINEDVKIGKEVQQILAISQVDRKNKIVYSFVKSNPEGEQKFQIDPATGNITTASTLDYEQVKEYRLQFRATDIATNLYATCVVIISLIDVNDDTPTFKLEEYTARVPENAAVDFNVITIEADDRDTALSGQVGYTLEVSDSSEGQFFAINGQTGVMITKKSFDREDPKHIPKYNVFAVATDKGVPPLAAKVTISVAIVDQNDQPPIFPKPSYEVSVQEDAGIGTSVGEFTATDADIGDNARLDYFISSGDASHIFKMESVYGDNNFGILILAGKLDFETKKTYNISITATDRKDSATVPVVVNVLDTNDNIPKFDNLIYEAIIPENSPPGQRVETVSATDLDSPKIQNDLRYSLDADGQKNFAVDAVSGLITTANQRLDREVNPVVTFTAFAFDGKHRGEALIRVTLRDVNDNSPYFPNPPYVGYVEENLDPGASVMVIQAFDLDSGIDGEIVYSLDDSSNNKFKIDRISGLVTTVETMEKETAVNSFTIVVKATDKGSPALSGTVTATIRVSDGNDQAPVFNPREYRQKVPEDSPPGFLVTQVKATDQDEGYNAELEFTITAGNDPYQFYIDPKTGEILVSGMLDFDHGKKSYNLTVMVSDRGVPPKQAAKPAFVYITIVDSNDNPPVFVPAEYSIKVTEGTKPGDTVQLVTAVDQDTGTNALFTFGIADGDDADMFGIRPDPKNSSIGFIYTVLQLDRETVPQYNLTVTATDTGGLQGVAVVRITVLDTNDNGPWFQPRYYEGSITVTSDSNSQQEITTVKVFDPDEPSNGPPFSFSIESTKPATDATRFGLRKDPKEPQTANEVYSIGAFTRQVPEWELTIKAIDSGKPVAMFNSTLVFVWVVDDKNLNEPFDGALTIIVNAYDDKFAGGIIGKAYYQDVDYMGDENTYSMSEQEYFTLGELTGDISAAANIPVGLYKFEIEVLEQRLRPNTNTFKTVTSSVSVIVQSVPRAAILQSVAVQILAYRRPALFVADIYTNFRQKLAGIFGVQEADILIFSVQRAPSKRVPLADVFGVEIQLAVRSSGSSFMDKMDVVRGIVEGKAELEALSLKIGDIGIDVCAAERQDVGVCNNKVEASSAFTVVSGDIGQIEPSKSSLTVVSIDITLKAVYTSILPPDINCTTGTPCLHGGTCHNAVPKGIICECGRDYLGPECQSTTRTFRGNSYLWLDKLASYERSSISLQFMTGSANGLLLYQGPLYNGANNGLPDSIALYLVDGFAKLVIALGPHPMTPLELYMNKGDRLDDRTWHTVQVIRERKKVVLRIDKCSYSKIVEDYGQIVEDRSSCEIKGEIWGSAIYLNGFGPLQIGGVENSISDMKINFTGFSGCIRNIYNNGRMYDLFNPLKEVNTELGCRLNNQCPNCNGRGYCEPFWNYAICVCDLGFGGANCDSRTQANWYRANSFTQYRVKQVKRKRRELVPAPVSMANEFYTNIALQVRVSPNSSNVVIFLASNSLGTEFNRIDVKNHVLRYAFRLGDRMKILKIPQLNVTDDKYHTVIVKREGNRASLQIDYRGKVEGTTGGLHKLLNMGGGSFFTGGLPNITEVRVVEAFVNSGGNAVLRTAEGNIISSGMGSAYTGIGSYMSNVITVNNFGGVDVSYGVSGAPHVQRTIKTKSSIFTGSSGVITRISVSRGHSVEFMNSRFFTRKTKQKQKVIISSSGGSVSGGSGGASGGSGGASGSGGSVGVSGGGGASVGGSILGSSASMDTKGNLRSYGSGFGTWTIAGAGPNEAGDVQVIGDFGGCTASNSYNGLDLDSHPTIEARRQNVEFPCPCGSNFCRHGGTCVSADPPYCLCPVGWSGPVCESIVKDPRPGQRPSSRWANPAVIACILVILLAILVIIGAVLLKRRPQPAVVAVVEDGHVHDNVRPYHDEGAGEEDNFGYDISTLMKYTYVENGVAGTGGVGHGKFKNGGSSGEEEFTATETKPLLQGAMPDDDLHFKTTTITKRKVVHPDSIDVKQFIDTRASEADGEYILSIDELHIYRYEGDDSDVDDLSELGDSDEEPDEEEEQEFAFLQDWGKKFDNLNRIFNEDE.

The first 22 residues, 1 to 22, serve as a signal peptide directing secretion; it reads MRGINAIVGFLLCFCLLHRINT. Cadherin domains follow at residues 23–128, 129–238, 239–350, 351–455, 459–566, 567–664, 665–764, 765–884, 885–994, 1092–1197, 1290–1395, 1396–1499, 1495–1597, 1601–1701, 1793–1891, 1892–1992, 1993–2100, 2101–2202, 2203–2312, 2313–2423, 2425–2529, 2530–2639, 2640–2746, 2747–2849, 2850–2954, 2955–3062, 3063–3170, and 3173–3288; these read AVQF…SPTF, PQHL…SPVF, EKKS…VPVF, QEES…TPVF, NPQQ…NPDF, SKVV…PPTF, KNAP…PPTF, SRSS…SPEF, SQTS…PPLF, EAQP…QPRF, SRTV…SPKF, SADS…PPKF, GPPK…EPQF, SNGF…QPVR, TMID…KPQF, SESA…YPKF, EPNL…KPQF, LESD…RPVF, TDCP…FPFF, LTRT…PPAF, PSAV…TPTF, KLEE…PPIF, PKPS…IPKF, DNLI…SPYF, PNPP…APVF, NPRE…PPVF, VPAE…GPWF, and RYYE…EPFD. Residues 23 to 4258 are Extracellular-facing; it reads AVQFKQEILE…RPSSRWANPA (4236 aa). In terms of domain architecture, EGF-like 1 spans 3551-3589; sequence PDINCTTGTPCLHGGTCHNAVPKGIICECGRDYLGPECQ. 7 disulfide bridges follow: cysteine 3555/cysteine 3567, cysteine 3561/cysteine 3577, cysteine 3579/cysteine 3588, cysteine 3762/cysteine 3788, cysteine 3794/cysteine 3803, cysteine 3797/cysteine 3812, and cysteine 3814/cysteine 3823. The Laminin G-like 1 domain occupies 3590–3788; that stretch reads STTRTFRGNS…LKEVNTELGC (199 aa). Residues 3790–3824 enclose the EGF-like 2 domain; that stretch reads LNNQCPNCNGRGYCEPFWNYAICVCDLGFGGANCD. Residues 3842-4096 enclose the Laminin G-like 2 domain; sequence VKQVKRKRRE…KVIISSSGGS (255 aa). The disordered stretch occupies residues 4089-4118; that stretch reads IISSSGGSVSGGSGGASGGSGGASGSGGSV. Gly residues predominate over residues 4096 to 4118; sequence SVSGGSGGASGGSGGASGSGGSV. In terms of domain architecture, EGF-like 3 spans 4206–4238; sequence PCGSNFCRHGGTCVSADPPYCLCPVGWSGPVCE. 3 cysteine pairs are disulfide-bonded: cysteine 4207–cysteine 4218, cysteine 4212–cysteine 4226, and cysteine 4228–cysteine 4237. The chain crosses the membrane as a helical span at residues 4259–4279; the sequence is VIACILVILLAILVIIGAVLL. Topologically, residues 4280–4467 are cytoplasmic; sequence KRRPQPAVVA…NLNRIFNEDE (188 aa). The interval 4424–4445 is disordered; sequence DVDDLSELGDSDEEPDEEEEQE.

As to expression, component of the acid-insoluble organic matrix of the aragonitic skeleton (at protein level).

Its subcellular location is the membrane. This chain is Protocadherin-like protein, found in Acropora millepora (Staghorn coral).